The sequence spans 96 residues: Co-chaperonin GroES (96 aa).

This sequence belongs to the GroES chaperonin family. As to quaternary structure, heptamer of 7 subunits arranged in a ring. Interacts with the chaperonin GroEL.

The protein localises to the cytoplasm. In terms of biological role, together with the chaperonin GroEL, plays an essential role in assisting protein folding. The GroEL-GroES system forms a nano-cage that allows encapsulation of the non-native substrate proteins and provides a physical environment optimized to promote and accelerate protein folding. GroES binds to the apical surface of the GroEL ring, thereby capping the opening of the GroEL channel. The chain is Co-chaperonin GroES from Methylorubrum populi (strain ATCC BAA-705 / NCIMB 13946 / BJ001) (Methylobacterium populi).